The following is a 539-amino-acid chain: E3 ubiquitin-protein ligase arc-1 (539 aa).

An RING-type zinc finger spans residues Cys-6–Arg-53. Residues Leu-103–Leu-149 form a B box-type zinc finger. The tract at residues Glu-369 to Val-539 is ARF-like. Residues Gly-376–Thr-383, Asp-422–Leu-426, and Asn-481–Asp-484 contribute to the GTP site.

It in the C-terminal section; belongs to the small GTPase superfamily. Arf family.

The enzyme catalyses S-ubiquitinyl-[E2 ubiquitin-conjugating enzyme]-L-cysteine + [acceptor protein]-L-lysine = [E2 ubiquitin-conjugating enzyme]-L-cysteine + N(6)-ubiquitinyl-[acceptor protein]-L-lysine.. Its pathway is protein modification; protein ubiquitination. Acts as an E3 ubiquitin-protein ligase. The sequence is that of E3 ubiquitin-protein ligase arc-1 (arc-1) from Caenorhabditis elegans.